We begin with the raw amino-acid sequence, 153 residues long: Large ribosomal subunit protein uL23m (153 aa).

A disordered region spans residues 131 to 153 (MADEQQRQGSDPQRGGVPNWFSL).

The protein belongs to the universal ribosomal protein uL23 family. Component of the mitochondrial ribosome large subunit (39S) which comprises a 16S rRNA and about 50 distinct proteins.

Its subcellular location is the mitochondrion. This Otolemur garnettii (Small-eared galago) protein is Large ribosomal subunit protein uL23m (MRPL23).